A 265-amino-acid polypeptide reads, in one-letter code: Imidazole glycerol phosphate synthase subunit HisF (265 aa).

Catalysis depends on residues Asp11 and Asp130.

It belongs to the HisA/HisF family. As to quaternary structure, heterodimer of HisH and HisF.

The protein resides in the cytoplasm. The enzyme catalyses 5-[(5-phospho-1-deoxy-D-ribulos-1-ylimino)methylamino]-1-(5-phospho-beta-D-ribosyl)imidazole-4-carboxamide + L-glutamine = D-erythro-1-(imidazol-4-yl)glycerol 3-phosphate + 5-amino-1-(5-phospho-beta-D-ribosyl)imidazole-4-carboxamide + L-glutamate + H(+). It functions in the pathway amino-acid biosynthesis; L-histidine biosynthesis; L-histidine from 5-phospho-alpha-D-ribose 1-diphosphate: step 5/9. In terms of biological role, IGPS catalyzes the conversion of PRFAR and glutamine to IGP, AICAR and glutamate. The HisF subunit catalyzes the cyclization activity that produces IGP and AICAR from PRFAR using the ammonia provided by the HisH subunit. This is Imidazole glycerol phosphate synthase subunit HisF from Idiomarina loihiensis (strain ATCC BAA-735 / DSM 15497 / L2-TR).